A 105-amino-acid chain; its full sequence is Nitrogen fixation nifHD region glnB-like protein 1 (105 aa).

This sequence belongs to the P(II) protein family.

Functionally, could be involved in the regulation of nitrogen fixation. In Methanococcus maripaludis (Methanococcus deltae), this protein is Nitrogen fixation nifHD region glnB-like protein 1 (glnBI).